Consider the following 40-residue polypeptide: MANTTGRVPLWLIGTVAGILVIGLVGIFFYGSYSGLGSSL.

Residues 10 to 30 (LWLIGTVAGILVIGLVGIFFY) traverse the membrane as a helical segment.

The protein belongs to the PsbJ family. As to quaternary structure, PSII is composed of 1 copy each of membrane proteins PsbA, PsbB, PsbC, PsbD, PsbE, PsbF, PsbH, PsbI, PsbJ, PsbK, PsbL, PsbM, PsbT, PsbX, PsbY, PsbZ, Psb30/Ycf12, at least 3 peripheral proteins of the oxygen-evolving complex and a large number of cofactors. It forms dimeric complexes.

It localises to the plastid. Its subcellular location is the chloroplast thylakoid membrane. In terms of biological role, one of the components of the core complex of photosystem II (PSII). PSII is a light-driven water:plastoquinone oxidoreductase that uses light energy to abstract electrons from H(2)O, generating O(2) and a proton gradient subsequently used for ATP formation. It consists of a core antenna complex that captures photons, and an electron transfer chain that converts photonic excitation into a charge separation. The sequence is that of Photosystem II reaction center protein J from Marchantia polymorpha (Common liverwort).